The following is a 317-amino-acid chain: Cytochrome f (317 aa).

An N-terminal signal peptide occupies residues 1–31 (MIFKPQSFLKAIVLSMTITFAFNMSAPIASA). Heme-binding residues include tyrosine 32, cysteine 52, cysteine 55, and histidine 56. The helical transmembrane segment at 280–302 (PVRIQGLLAFFACILLAQILLVV) threads the bilayer.

It belongs to the cytochrome f family. In terms of assembly, the 4 large subunits of the cytochrome b6-f complex are cytochrome b6, subunit IV (17 kDa polypeptide, petD), cytochrome f and the Rieske protein, while the 4 small subunits are PetG, PetL, PetM and PetN. The complex functions as a dimer. Heme serves as cofactor.

It localises to the plastid. Its subcellular location is the chloroplast thylakoid membrane. Its function is as follows. Component of the cytochrome b6-f complex, which mediates electron transfer between photosystem II (PSII) and photosystem I (PSI), cyclic electron flow around PSI, and state transitions. This chain is Cytochrome f, found in Chlamydomonas subcaudata.